Here is a 143-residue protein sequence, read N- to C-terminus: Nucleoside diphosphate kinase (143 aa).

K11, F59, R87, T93, R104, and N114 together coordinate ATP. H117 serves as the catalytic Pros-phosphohistidine intermediate.

It belongs to the NDK family. Homotetramer. Mg(2+) serves as cofactor.

It is found in the cytoplasm. It carries out the reaction dZDP + ATP = dZTP + ADP. The enzyme catalyses a 2'-deoxyribonucleoside 5'-diphosphate + ATP = a 2'-deoxyribonucleoside 5'-triphosphate + ADP. The catalysed reaction is a ribonucleoside 5'-diphosphate + ATP = a ribonucleoside 5'-triphosphate + ADP. The protein operates within purine metabolism. Functionally, major role in the synthesis of nucleoside triphosphates other than ATP. The ATP gamma phosphate is transferred to the NDP beta phosphate via a ping-pong mechanism, using a phosphorylated active-site intermediate. (Microbial infection) Catalyzes the phosphorylation of dZDP to dZTP, when the bacterium is infected by a phage that produces the substrate for the synthesis of dZTP (2- amino-2'-deoxyadenosine 5'-triphosphate), which is then used by the phage as a DNA polymerase substrate. The polypeptide is Nucleoside diphosphate kinase (Salmonella paratyphi C (strain RKS4594)).